The primary structure comprises 254 residues: MAPAASASASAVVTPSSFRCVPTASCGLGARGKAPAPRRLLHDHAQGKKRAAATWSLKAGLWDSLRSGFLKSNNSTETVEPPSAPIEEEEPLPEELVLLERTLADGSTEQIIFSSAGDVNVYDLQALCDKVGWPRRPLTKIAASLRNSYLVATLHSVTMPSKAEGEERKQLIGMARATSDHAFNATIWDVLVDPSYQGQGLGKALMEKVIRTLLQRDISNITLFADNKVVDFYKNLGFEADPQGIKGMFWYPRF.

The N-terminal 74 residues, 1 to 74 (MAPAASASAS…LRSGFLKSNN (74 aa)), are a transit peptide targeting the chloroplast. Residues 111 to 254 (IIFSSAGDVN…IKGMFWYPRF (144 aa)) enclose the N-acetyltransferase domain.

This sequence belongs to the acetyltransferase family. As to expression, expressed in roots and shoots.

The protein resides in the plastid. It localises to the chloroplast. Its subcellular location is the nucleus. The enzyme catalyses serotonin + acetyl-CoA = N-acetylserotonin + CoA + H(+). The catalysed reaction is tyramine + acetyl-CoA = N-acetyltyramine + CoA + H(+). It catalyses the reaction tryptamine + acetyl-CoA = N-acetyltryptamine + CoA + H(+). It carries out the reaction 5-methoxytryptamine + acetyl-CoA = melatonin + CoA + H(+). It functions in the pathway aromatic compound metabolism; melatonin biosynthesis; melatonin from serotonin: step 1/2. Its function is as follows. Catalyzes the N-acetylation of serotonin into N-acetylserotonin, the penultimate step in the synthesis of melatonin. Catalyzes in vitro the N-acetylation of tryptamine to produce N-acetyltryptamine, 5-methoxytryptamine to produce melatonin and tyramine to produce N-acetyltyramine. The chain is Serotonin N-acetyltransferase 1, chloroplastic from Oryza sativa subsp. japonica (Rice).